A 329-amino-acid chain; its full sequence is Alternative oxidase, mitochondrial (329 aa).

A helical membrane pass occupies residues 115-135; sequence VISRCLFLETVAGVPGMVGGM. Residues E123, E162, and H165 each contribute to the Fe cation site. The helical transmembrane segment at 181–201 threads the bilayer; that stretch reads VSIIITQAIMYLFLLVAYVIS. E213, E266, and H269 together coordinate Fe cation. A disordered region spans residues 300 to 329; that stretch reads EMYSNQPSGKTRTDFGSEGAKTASNVNKHV.

It belongs to the alternative oxidase family. In terms of assembly, homodimer; disulfide-linked. It depends on Fe cation as a cofactor.

The protein localises to the mitochondrion inner membrane. Its function is as follows. Catalyzes cyanide-resistant oxygen consumption. May increase respiration when the cytochrome respiratory pathway is restricted, or in response to low temperatures. In Trypanosoma brucei brucei, this protein is Alternative oxidase, mitochondrial (AOX).